The primary structure comprises 103 residues: Urease subunit beta (103 aa).

Belongs to the urease beta subunit family. In terms of assembly, heterotrimer of UreA (gamma), UreB (beta) and UreC (alpha) subunits. Three heterotrimers associate to form the active enzyme.

The protein resides in the cytoplasm. It catalyses the reaction urea + 2 H2O + H(+) = hydrogencarbonate + 2 NH4(+). It participates in nitrogen metabolism; urea degradation; CO(2) and NH(3) from urea (urease route): step 1/1. The polypeptide is Urease subunit beta (Streptomyces avermitilis (strain ATCC 31267 / DSM 46492 / JCM 5070 / NBRC 14893 / NCIMB 12804 / NRRL 8165 / MA-4680)).